The following is a 609-amino-acid chain: Dihydroxy-acid dehydratase (609 aa).

Asp81 is a Mg(2+) binding site. Residue Cys122 coordinates [2Fe-2S] cluster. Positions 123 and 124 each coordinate Mg(2+). At Lys124 the chain carries N6-carboxylysine. Cys195 provides a ligand contact to [2Fe-2S] cluster. Position 491 (Glu491) interacts with Mg(2+). Residue Ser517 is the Proton acceptor of the active site.

The protein belongs to the IlvD/Edd family. In terms of assembly, homodimer. The cofactor is [2Fe-2S] cluster. Mg(2+) is required as a cofactor.

The catalysed reaction is (2R)-2,3-dihydroxy-3-methylbutanoate = 3-methyl-2-oxobutanoate + H2O. The enzyme catalyses (2R,3R)-2,3-dihydroxy-3-methylpentanoate = (S)-3-methyl-2-oxopentanoate + H2O. It functions in the pathway amino-acid biosynthesis; L-isoleucine biosynthesis; L-isoleucine from 2-oxobutanoate: step 3/4. Its pathway is amino-acid biosynthesis; L-valine biosynthesis; L-valine from pyruvate: step 3/4. Its function is as follows. Functions in the biosynthesis of branched-chain amino acids. Catalyzes the dehydration of (2R,3R)-2,3-dihydroxy-3-methylpentanoate (2,3-dihydroxy-3-methylvalerate) into 2-oxo-3-methylpentanoate (2-oxo-3-methylvalerate) and of (2R)-2,3-dihydroxy-3-methylbutanoate (2,3-dihydroxyisovalerate) into 2-oxo-3-methylbutanoate (2-oxoisovalerate), the penultimate precursor to L-isoleucine and L-valine, respectively. This is Dihydroxy-acid dehydratase from Acinetobacter baumannii (strain ATCC 17978 / DSM 105126 / CIP 53.77 / LMG 1025 / NCDC KC755 / 5377).